The sequence spans 524 residues: D-3-phosphoglycerate dehydrogenase (524 aa).

Residues 149–150 (RI), Asp169, 229–231 (CAR), and Asp255 each bind NAD(+). Arg231 is a catalytic residue. Residue Glu260 is part of the active site. The Proton donor role is filled by His278. 278–281 (HQGA) is an NAD(+) binding site. The ACT domain occupies 452–524 (LAIIKHIDRP…NIKDVAVINL (73 aa)).

Belongs to the D-isomer specific 2-hydroxyacid dehydrogenase family.

It carries out the reaction (2R)-3-phosphoglycerate + NAD(+) = 3-phosphooxypyruvate + NADH + H(+). Its pathway is amino-acid biosynthesis; L-serine biosynthesis; L-serine from 3-phospho-D-glycerate: step 1/3. The protein is D-3-phosphoglycerate dehydrogenase (serA) of Methanocaldococcus jannaschii (strain ATCC 43067 / DSM 2661 / JAL-1 / JCM 10045 / NBRC 100440) (Methanococcus jannaschii).